Consider the following 206-residue polypeptide: Outer-membrane lipoprotein carrier protein (206 aa).

The N-terminal stretch at methionine 1 to alanine 21 is a signal peptide.

This sequence belongs to the LolA family. As to quaternary structure, monomer.

The protein resides in the periplasm. In terms of biological role, participates in the translocation of lipoproteins from the inner membrane to the outer membrane. Only forms a complex with a lipoprotein if the residue after the N-terminal Cys is not an aspartate (The Asp acts as a targeting signal to indicate that the lipoprotein should stay in the inner membrane). This is Outer-membrane lipoprotein carrier protein from Shewanella sp. (strain ANA-3).